We begin with the raw amino-acid sequence, 341 residues long: Heat-inducible transcription repressor HrcA (341 aa).

It belongs to the HrcA family.

Its function is as follows. Negative regulator of class I heat shock genes (grpE-dnaK-dnaJ and groELS operons). Prevents heat-shock induction of these operons. This is Heat-inducible transcription repressor HrcA from Corynebacterium glutamicum (strain ATCC 13032 / DSM 20300 / JCM 1318 / BCRC 11384 / CCUG 27702 / LMG 3730 / NBRC 12168 / NCIMB 10025 / NRRL B-2784 / 534).